A 435-amino-acid polypeptide reads, in one-letter code: Exopolysaccharide production protein ExoQ (435 aa).

The next 10 helical transmembrane spans lie at 11-31 (PGAN…VFAY), 35-55 (FGQV…LVDY), 65-85 (YLWI…SAAP), 117-137 (GMIA…TYHY), 156-176 (LGFY…VLGE), 178-198 (GLWM…LLTS), 203-223 (SVLT…ITAL), 230-250 (LLFI…IYAG), 325-345 (VVET…TAFF), and 361-381 (MVLF…IDIL).

It localises to the cell membrane. Its pathway is glycan metabolism; exopolysaccharide biosynthesis. In terms of biological role, involved in the production of exopolysaccharide. The chain is Exopolysaccharide production protein ExoQ (exoQ) from Rhizobium meliloti (strain 1021) (Ensifer meliloti).